The primary structure comprises 184 residues: Elongation factor P 1 (184 aa).

This sequence belongs to the elongation factor P family.

The protein localises to the cytoplasm. Its pathway is protein biosynthesis; polypeptide chain elongation. Its function is as follows. Involved in peptide bond synthesis. Stimulates efficient translation and peptide-bond synthesis on native or reconstituted 70S ribosomes in vitro. Probably functions indirectly by altering the affinity of the ribosome for aminoacyl-tRNA, thus increasing their reactivity as acceptors for peptidyl transferase. This Protochlamydia amoebophila (strain UWE25) protein is Elongation factor P 1 (efp1).